Here is a 320-residue protein sequence, read N- to C-terminus: Nucleoporin Nup37 (320 aa).

WD repeat units follow at residues 67-113 (KEQR…FTSL), 118-157 (GHGD…ENVI), 160-200 (GLSS…TVIS), and 203-242 (SPKF…VPAD).

The protein localises to the nucleus. Its subcellular location is the nuclear pore complex. Functionally, as part of the nuclear pore complex (NPC), has a role in its assembly and function. Its function is as follows. (Microbial infection) Required for optimal replication of E.chaffeensis. The polypeptide is Nucleoporin Nup37 (Drosophila melanogaster (Fruit fly)).